The chain runs to 81 residues: Photosystem I iron-sulfur center (81 aa).

2 4Fe-4S ferredoxin-type domains span residues 2-31 (SHSVKIYDTCIGCTQCVRACPTDVLEMIPW) and 39-68 (IASAPRTEDCVGCKRCESACPTDFLSVRVY). [4Fe-4S] cluster-binding residues include Cys-11, Cys-14, Cys-17, Cys-21, Cys-48, Cys-51, Cys-54, and Cys-58.

In terms of assembly, the eukaryotic PSI reaction center is composed of at least 11 subunits. It depends on [4Fe-4S] cluster as a cofactor.

The protein resides in the plastid. The protein localises to the chloroplast thylakoid membrane. It catalyses the reaction reduced [plastocyanin] + hnu + oxidized [2Fe-2S]-[ferredoxin] = oxidized [plastocyanin] + reduced [2Fe-2S]-[ferredoxin]. Apoprotein for the two 4Fe-4S centers FA and FB of photosystem I (PSI); essential for photochemical activity. FB is the terminal electron acceptor of PSI, donating electrons to ferredoxin. The C-terminus interacts with PsaA/B/D and helps assemble the protein into the PSI complex. Required for binding of PsaD and PsaE to PSI. PSI is a plastocyanin-ferredoxin oxidoreductase, converting photonic excitation into a charge separation, which transfers an electron from the donor P700 chlorophyll pair to the spectroscopically characterized acceptors A0, A1, FX, FA and FB in turn. This Arabis hirsuta (Hairy rock-cress) protein is Photosystem I iron-sulfur center.